Consider the following 376-residue polypeptide: uncharacterized protein (376 aa).

Belongs to the mimivirus R1 family.

This is an uncharacterized protein from Acanthamoeba polyphaga mimivirus (APMV).